We begin with the raw amino-acid sequence, 497 residues long: Arginine/ornithine antiporter ArcD2 (497 aa).

The next 13 membrane-spanning stretches (helical) occupy residues glycine 8–phenylalanine 28, glycine 41–phenylalanine 61, phenylalanine 88–leucine 108, serine 127–valine 147, isoleucine 160–phenylalanine 180, isoleucine 220–methionine 240, valine 255–tyrosine 275, valine 297–tryptophan 317, leucine 354–alanine 374, phenylalanine 378–phenylalanine 398, serine 406–leucine 426, tryptophan 429–alanine 449, and tryptophan 462–glycine 482.

The protein belongs to the amino acid-polyamine-organocation (APC) superfamily. Basic amino acid/polyamine antiporter (APA) (TC 2.A.3.2) family.

It is found in the cell membrane. It catalyses the reaction L-ornithine(in) + L-arginine(out) = L-ornithine(out) + L-arginine(in). Catalyzes electroneutral exchange between L-arginine and L-ornithine. Can also efficiently translocate L-alanine. May function in vivo as a L-arginine/L-alanine exchanger in a pathway together with the arcT gene, which is found adjacent to the arcD2 gene in the ADI gene cluster. This Lactococcus lactis subsp. cremoris (strain MG1363) protein is Arginine/ornithine antiporter ArcD2.